The following is a 540-amino-acid chain: Phosphoenolpyruvate carboxykinase (ATP) (540 aa).

A substrate-binding site is contributed by arginine 65. The residue at position 87 (lysine 87) is an N6-acetyllysine. Positions 207 and 213 each coordinate substrate. ATP is bound by residues lysine 213, histidine 232, and 248–256 (GLSGTGKTT). The Mn(2+) site is built by lysine 213 and histidine 232. Aspartate 269 provides a ligand contact to Mn(2+). ATP contacts are provided by residues glutamate 297, arginine 333, 449–450 (RI), and threonine 455. Arginine 333 is a substrate binding site. Lysine 523 carries the N6-acetyllysine modification.

The protein belongs to the phosphoenolpyruvate carboxykinase (ATP) family. Monomer. It depends on Mn(2+) as a cofactor.

It is found in the cytoplasm. The catalysed reaction is oxaloacetate + ATP = phosphoenolpyruvate + ADP + CO2. The protein operates within carbohydrate biosynthesis; gluconeogenesis. Functionally, involved in the gluconeogenesis. Catalyzes the conversion of oxaloacetate (OAA) to phosphoenolpyruvate (PEP) through direct phosphoryl transfer between the nucleoside triphosphate and OAA. The chain is Phosphoenolpyruvate carboxykinase (ATP) from Shigella flexneri serotype 5b (strain 8401).